The chain runs to 123 residues: Protein crumbs homolog 3 (123 aa).

The first 26 residues, Met1 to Gly26, serve as a signal peptide directing secretion. The Extracellular segment spans residues Gln27 to Ala59. A glycan (N-linked (GlcNAc...) asparagine) is linked at Asn36. Residues Ile60–Leu80 traverse the membrane as a helical segment. Topologically, residues Arg81 to Cys120 are cytoplasmic. Positions Arg87–Ile123 are disordered. Over residues Ser96–Val117 the composition is skewed to basic and acidic residues. Positions Gly119–Ile123 match the PDZ-binding motif.

In terms of assembly, component of a complex composed of CRB3, PALS1 and PATJ. Interacts (via C-terminus) with PALS1 (via PDZ domain). Interacts with PARD6A. Interacts (via intracellular domain) with EPB41L5. Interacts with WDR83.

The protein localises to the apical cell membrane. Its subcellular location is the cell junction. The protein resides in the tight junction. Its function is as follows. Involved in the establishment of cell polarity in mammalian epithelial cells. Regulates the morphogenesis of tight junctions. Involved in promoting phosphorylation and cytoplasmic retention of transcriptional coactivators YAP1 and WWTR1/TAZ which leads to suppression of TGFB1-dependent transcription of target genes such as CCN2/CTGF, SERPINE1/PAI1, SNAI1/SNAIL1 and SMAD7. The protein is Protein crumbs homolog 3 of Canis lupus familiaris (Dog).